The following is a 521-amino-acid chain: Glutamate--tRNA ligase (521 aa).

Residues 30-40 (PSPTGYLHVGG) carry the 'HIGH' region motif. The short motif at 277–281 (KLSKR) is the 'KMSKS' region element. K280 serves as a coordination point for ATP.

It belongs to the class-I aminoacyl-tRNA synthetase family. Glutamate--tRNA ligase type 1 subfamily. As to quaternary structure, monomer.

The protein resides in the cytoplasm. The catalysed reaction is tRNA(Glu) + L-glutamate + ATP = L-glutamyl-tRNA(Glu) + AMP + diphosphate. Functionally, catalyzes the attachment of glutamate to tRNA(Glu) in a two-step reaction: glutamate is first activated by ATP to form Glu-AMP and then transferred to the acceptor end of tRNA(Glu). The chain is Glutamate--tRNA ligase from Chlorobium phaeovibrioides (strain DSM 265 / 1930) (Prosthecochloris vibrioformis (strain DSM 265)).